A 364-amino-acid polypeptide reads, in one-letter code: Cobalt-precorrin-5B C(1)-methyltransferase (364 aa).

Belongs to the CbiD family.

The enzyme catalyses Co-precorrin-5B + S-adenosyl-L-methionine = Co-precorrin-6A + S-adenosyl-L-homocysteine. Its pathway is cofactor biosynthesis; adenosylcobalamin biosynthesis; cob(II)yrinate a,c-diamide from sirohydrochlorin (anaerobic route): step 6/10. Catalyzes the methylation of C-1 in cobalt-precorrin-5B to form cobalt-precorrin-6A. The chain is Cobalt-precorrin-5B C(1)-methyltransferase from Pseudomonas entomophila (strain L48).